A 429-amino-acid polypeptide reads, in one-letter code: Adenylosuccinate synthetase (429 aa).

GTP-binding positions include 12 to 18 and 40 to 42; these read GDEGKGK and GHT. Catalysis depends on Asp-13, which acts as the Proton acceptor. Mg(2+) contacts are provided by Asp-13 and Gly-40. Residues 13–16, 38–41, Thr-128, Arg-142, Gln-223, Thr-238, and Arg-302 contribute to the IMP site; these read DEGK and NAGH. His-41 acts as the Proton donor in catalysis. 298-304 is a binding site for substrate; sequence TVTGRPR. GTP-binding positions include Arg-304, 330 to 332, and 412 to 414; these read LLD and SVG.

It belongs to the adenylosuccinate synthetase family. Homodimer. It depends on Mg(2+) as a cofactor.

The protein localises to the cytoplasm. The enzyme catalyses IMP + L-aspartate + GTP = N(6)-(1,2-dicarboxyethyl)-AMP + GDP + phosphate + 2 H(+). Its pathway is purine metabolism; AMP biosynthesis via de novo pathway; AMP from IMP: step 1/2. Its function is as follows. Plays an important role in the de novo pathway of purine nucleotide biosynthesis. Catalyzes the first committed step in the biosynthesis of AMP from IMP. The chain is Adenylosuccinate synthetase from Limosilactobacillus fermentum (strain NBRC 3956 / LMG 18251) (Lactobacillus fermentum).